Reading from the N-terminus, the 258-residue chain is 6-carboxyhexanoate--CoA ligase (258 aa).

It belongs to the BioW family. Homodimer. Requires Mg(2+) as cofactor.

It carries out the reaction heptanedioate + ATP + CoA = 6-carboxyhexanoyl-CoA + AMP + diphosphate. It functions in the pathway metabolic intermediate metabolism; pimeloyl-CoA biosynthesis; pimeloyl-CoA from pimelate: step 1/1. Its function is as follows. Catalyzes the transformation of pimelate into pimeloyl-CoA with concomitant hydrolysis of ATP to AMP. The chain is 6-carboxyhexanoate--CoA ligase from Bacillus subtilis (strain BSn5).